A 206-amino-acid chain; its full sequence is MRPLTPRQAEILELIKRNIADTGMPPTRAEIARRLGFKSANAAEEHLKALAKKGCIEIMPGTSRGIKLTQENTEDADLGLPLIGQVAAGEPILAQEHVEQHYKVDPAMFKPSADFLLRVRGDSMKNIGILEGDLLAVHKIQQARNGQIVVARVEDDVTVKRFEKKGNKVFLHAENEEYSPIEVDLANQSLSIEGLAVGVIRNGDWQ.

Positions arginine 28–lysine 48 form a DNA-binding region, H-T-H motif. Active-site for autocatalytic cleavage activity residues include serine 123 and lysine 160.

Belongs to the peptidase S24 family. Homodimer.

The enzyme catalyses Hydrolysis of Ala-|-Gly bond in repressor LexA.. In terms of biological role, represses a number of genes involved in the response to DNA damage (SOS response), including recA and lexA. In the presence of single-stranded DNA, RecA interacts with LexA causing an autocatalytic cleavage which disrupts the DNA-binding part of LexA, leading to derepression of the SOS regulon and eventually DNA repair. This chain is LexA repressor, found in Shewanella halifaxensis (strain HAW-EB4).